A 118-amino-acid polypeptide reads, in one-letter code: Small ribosomal subunit protein uS13 (118 aa).

The disordered stretch occupies residues 94–118 (GLPVHGQRTKTNARTRKGPAKSITR).

It belongs to the universal ribosomal protein uS13 family. In terms of assembly, part of the 30S ribosomal subunit. Forms a loose heterodimer with protein S19. Forms two bridges to the 50S subunit in the 70S ribosome.

Functionally, located at the top of the head of the 30S subunit, it contacts several helices of the 16S rRNA. In the 70S ribosome it contacts the 23S rRNA (bridge B1a) and protein L5 of the 50S subunit (bridge B1b), connecting the 2 subunits; these bridges are implicated in subunit movement. Contacts the tRNAs in the A and P-sites. This is Small ribosomal subunit protein uS13 from Acidithiobacillus ferrooxidans (strain ATCC 23270 / DSM 14882 / CIP 104768 / NCIMB 8455) (Ferrobacillus ferrooxidans (strain ATCC 23270)).